Consider the following 487-residue polypeptide: Protein nucleotidyltransferase YdiU (487 aa).

ATP is bound by residues glycine 90, glycine 92, arginine 93, lysine 113, aspartate 125, glycine 126, arginine 176, and arginine 183. Aspartate 252 serves as the catalytic Proton acceptor. Mg(2+)-binding residues include asparagine 253 and aspartate 262. Position 262 (aspartate 262) interacts with ATP.

This sequence belongs to the SELO family. The cofactor is Mg(2+). It depends on Mn(2+) as a cofactor.

It catalyses the reaction L-seryl-[protein] + ATP = 3-O-(5'-adenylyl)-L-seryl-[protein] + diphosphate. It carries out the reaction L-threonyl-[protein] + ATP = 3-O-(5'-adenylyl)-L-threonyl-[protein] + diphosphate. The enzyme catalyses L-tyrosyl-[protein] + ATP = O-(5'-adenylyl)-L-tyrosyl-[protein] + diphosphate. The catalysed reaction is L-histidyl-[protein] + UTP = N(tele)-(5'-uridylyl)-L-histidyl-[protein] + diphosphate. It catalyses the reaction L-seryl-[protein] + UTP = O-(5'-uridylyl)-L-seryl-[protein] + diphosphate. It carries out the reaction L-tyrosyl-[protein] + UTP = O-(5'-uridylyl)-L-tyrosyl-[protein] + diphosphate. Functionally, nucleotidyltransferase involved in the post-translational modification of proteins. It can catalyze the addition of adenosine monophosphate (AMP) or uridine monophosphate (UMP) to a protein, resulting in modifications known as AMPylation and UMPylation. The protein is Protein nucleotidyltransferase YdiU of Pseudomonas fluorescens (strain SBW25).